The following is a 324-amino-acid chain: Putative transcription factor sel-7 (324 aa).

Positions 67–85 are enriched in polar residues; sequence SPPQTVISEAPPQSFTPSA. Residues 67–151 are disordered; sequence SPPQTVISEA…DEKVLADGPF (85 aa). Positions 86-98 are enriched in low complexity; sequence TNSTSDKTSSSLK. Residues 106-123 are compositionally biased toward acidic residues; it reads SDGDLDMEGEEDTEELFD. Residues 124-133 show a composition bias toward polar residues; the sequence is NESQPSQRNQ. Over residues 134-146 the composition is skewed to basic and acidic residues; it reads SPKETEVEDEKVL.

In terms of assembly, multimer. May interact with mediator complex subunit mdt-29. As to expression, widely expressed, including in pharyngeal muscle cells and body wall muscle cells.

The protein resides in the nucleus. Functionally, putative transcription factor. Positive regulator of the lin-12/Notch signaling pathway. Binds to specific DNA sequences in regulatory elements. Involved in cell fate decisions that require cell-cell interactions, such as the anchor cell (AC) / ventral uterine (VU) precursor cell fate decision. Heterochronic protein which controls the choice of stage specific cell fates, including the larval L3 stage-specific fate of seam cells. Involved in regulating the temporal expression pattern of hunchback-like protein hbl-1, thereby playing a role in the progression between larval stages L2 and L3. The polypeptide is Putative transcription factor sel-7 (Caenorhabditis elegans).